A 269-amino-acid polypeptide reads, in one-letter code: tRNA pseudouridine synthase A (269 aa).

The active-site Nucleophile is the Asp51. Tyr109 is a substrate binding site.

The protein belongs to the tRNA pseudouridine synthase TruA family. As to quaternary structure, homodimer.

The catalysed reaction is uridine(38/39/40) in tRNA = pseudouridine(38/39/40) in tRNA. Functionally, formation of pseudouridine at positions 38, 39 and 40 in the anticodon stem and loop of transfer RNAs. This is tRNA pseudouridine synthase A from Haemophilus influenzae (strain 86-028NP).